The sequence spans 429 residues: Tol-Pal system protein TolB (429 aa).

Positions 1–21 (MKPVFKMLLSLLILWTSLLHA) are cleaved as a signal peptide.

Belongs to the TolB family. As to quaternary structure, the Tol-Pal system is composed of five core proteins: the inner membrane proteins TolA, TolQ and TolR, the periplasmic protein TolB and the outer membrane protein Pal. They form a network linking the inner and outer membranes and the peptidoglycan layer.

It localises to the periplasm. In terms of biological role, part of the Tol-Pal system, which plays a role in outer membrane invagination during cell division and is important for maintaining outer membrane integrity. TolB occupies a key intermediary position in the Tol-Pal system because it communicates directly with both membrane-embedded components, Pal in the outer membrane and TolA in the inner membrane. The chain is Tol-Pal system protein TolB from Hamiltonella defensa subsp. Acyrthosiphon pisum (strain 5AT).